The sequence spans 135 residues: Large ribosomal subunit protein eL32 (135 aa).

It belongs to the eukaryotic ribosomal protein eL32 family.

This is Large ribosomal subunit protein eL32 (rpl32e) from Methanococcus maripaludis (strain DSM 14266 / JCM 13030 / NBRC 101832 / S2 / LL).